Here is a 450-residue protein sequence, read N- to C-terminus: MNPNQKIITIGSICMVVGIISLMLQIGNIISVWVSHIIQTWHPNQPEPCNQSINFYTEQAAASVTLAGNSSLCPISGWAIYSKDNSIRIGSKGDVFVIREPFISCSHLECRTFFLTQGALLNDKHSNGTVKDRSPYRTLMSCPVGEAPSPYKSRFESVAWSASACHDGISWLTIGISGPDNGAVAVLKYNGIITDTIKSWRNNILRTQESECACVNGSCFTVMTDGPSNEQASYKIFKIEKGRVVKSVELNAPNYHYEECSCYPDAGEITCVCRDNWHGSNRPWVSFNQNLEYQIGYICSGVFGDSPRPNDGTGSCGPVSLNGAYGVKGFSFKYGNGVWIGRTKSTSSRSGFEMIWDPNGWTETDSSFSLKQDIIAITDWSGYSGSFIQHPELTGLNCMRPCFWVELIRGRPKEKTIWTSGSSISFCGVNSDTVGWSWPDGAELPFTIDK.

Topologically, residues 1-6 are intravirion; it reads MNPNQK. A helical membrane pass occupies residues 7-27; sequence IITIGSICMVVGIISLMLQIG. The segment at 11–33 is involved in apical transport and lipid raft association; it reads GSICMVVGIISLMLQIGNIISVW. At 28 to 450 the chain is on the virion surface side; that stretch reads NIISVWVSHI…GAELPFTIDK (423 aa). The hypervariable stalk region stretch occupies residues 36 to 71; that stretch reads HIIQTWHPNQPEPCNQSINFYTEQAAASVTLAGNSS. Residues Asn-50 and Asn-69 are each glycosylated (N-linked (GlcNAc...) asparagine; by host). The segment at 72–450 is head of neuraminidase; it reads LCPISGWAIY…GAELPFTIDK (379 aa). 8 cysteine pairs are disulfide-bonded: Cys-73–Cys-398, Cys-105–Cys-110, Cys-165–Cys-212, Cys-214–Cys-219, Cys-260–Cys-273, Cys-262–Cys-271, Cys-299–Cys-316, and Cys-402–Cys-427. A substrate-binding site is contributed by Arg-99. Residue Asn-127 is glycosylated (N-linked (GlcNAc...) asparagine; by host). Residue Asp-132 is the Proton donor/acceptor of the active site. A substrate-binding site is contributed by Arg-133. N-linked (GlcNAc...) asparagine; by host glycosylation is present at Asn-216. 258–259 is a substrate binding site; that stretch reads EE. Arg-274 contacts substrate. 3 residues coordinate Ca(2+): Asp-275, Gly-279, and Asp-305. Arg-349 contacts substrate. Catalysis depends on Tyr-383, which acts as the Nucleophile.

The protein belongs to the glycosyl hydrolase 34 family. Homotetramer. Requires Ca(2+) as cofactor. Post-translationally, N-glycosylated.

The protein resides in the virion membrane. It is found in the host apical cell membrane. It catalyses the reaction Hydrolysis of alpha-(2-&gt;3)-, alpha-(2-&gt;6)-, alpha-(2-&gt;8)- glycosidic linkages of terminal sialic acid residues in oligosaccharides, glycoproteins, glycolipids, colominic acid and synthetic substrates.. With respect to regulation, inhibited by the neuraminidase inhibitors zanamivir (Relenza) and oseltamivir (Tamiflu). These drugs interfere with the release of progeny virus from infected cells and are effective against all influenza strains. Resistance to neuraminidase inhibitors is quite rare. Catalyzes the removal of terminal sialic acid residues from viral and cellular glycoconjugates. Cleaves off the terminal sialic acids on the glycosylated HA during virus budding to facilitate virus release. Additionally helps virus spread through the circulation by further removing sialic acids from the cell surface. These cleavages prevent self-aggregation and ensure the efficient spread of the progeny virus from cell to cell. Otherwise, infection would be limited to one round of replication. Described as a receptor-destroying enzyme because it cleaves a terminal sialic acid from the cellular receptors. May facilitate viral invasion of the upper airways by cleaving the sialic acid moieties on the mucin of the airway epithelial cells. Likely to plays a role in the budding process through its association with lipid rafts during intracellular transport. May additionally display a raft-association independent effect on budding. Plays a role in the determination of host range restriction on replication and virulence. Sialidase activity in late endosome/lysosome traffic seems to enhance virus replication. In Aves (Cat), this protein is Neuraminidase.